Here is a 227-residue protein sequence, read N- to C-terminus: Cytidylate kinase (227 aa).

12–20 is an ATP binding site; it reads GPSGAGKGT.

The protein belongs to the cytidylate kinase family. Type 1 subfamily.

It is found in the cytoplasm. It catalyses the reaction CMP + ATP = CDP + ADP. The catalysed reaction is dCMP + ATP = dCDP + ADP. This chain is Cytidylate kinase, found in Xanthomonas oryzae pv. oryzae (strain PXO99A).